Here is a 124-residue protein sequence, read N- to C-terminus: Large ribosomal subunit protein uL18 (124 aa).

The protein belongs to the universal ribosomal protein uL18 family. In terms of assembly, part of the 50S ribosomal subunit; part of the 5S rRNA/L5/L18/L25 subcomplex. Contacts the 5S and 23S rRNAs.

Functionally, this is one of the proteins that bind and probably mediate the attachment of the 5S RNA into the large ribosomal subunit, where it forms part of the central protuberance. The polypeptide is Large ribosomal subunit protein uL18 (Koribacter versatilis (strain Ellin345)).